The following is a 236-amino-acid chain: Uridylate kinase (236 aa).

10–13 (KLSG) is an ATP binding site. Residue Gly52 coordinates UMP. Gly53 and Arg57 together coordinate ATP. Residues Asp72 and 133–140 (TGNPFFTT) contribute to the UMP site. The ATP site is built by Thr160, Tyr166, and Asp169.

This sequence belongs to the UMP kinase family. In terms of assembly, homohexamer.

The protein resides in the cytoplasm. It catalyses the reaction UMP + ATP = UDP + ADP. Its pathway is pyrimidine metabolism; CTP biosynthesis via de novo pathway; UDP from UMP (UMPK route): step 1/1. With respect to regulation, inhibited by UTP. Functionally, catalyzes the reversible phosphorylation of UMP to UDP. The protein is Uridylate kinase of Polaromonas naphthalenivorans (strain CJ2).